Reading from the N-terminus, the 207-residue chain is Ribosomal RNA small subunit methyltransferase G (207 aa).

Residues G73, L78, 124-125 (VE), and R139 contribute to the S-adenosyl-L-methionine site.

It belongs to the methyltransferase superfamily. RNA methyltransferase RsmG family.

The protein localises to the cytoplasm. It catalyses the reaction guanosine(527) in 16S rRNA + S-adenosyl-L-methionine = N(7)-methylguanosine(527) in 16S rRNA + S-adenosyl-L-homocysteine. Its function is as follows. Specifically methylates the N7 position of guanine in position 527 of 16S rRNA. In Salmonella arizonae (strain ATCC BAA-731 / CDC346-86 / RSK2980), this protein is Ribosomal RNA small subunit methyltransferase G.